A 278-amino-acid chain; its full sequence is Putative transposase for insertion sequence element IS986/IS6110 (278 aa).

Residues 101–268 (GPPAPNRLWV…VPPVELEAAY (168 aa)) form the Integrase catalytic domain.

Involved in the transposition of the insertion sequence. This is Putative transposase for insertion sequence element IS986/IS6110 from Mycobacterium tuberculosis (strain CDC 1551 / Oshkosh).